The following is a 300-amino-acid chain: Protoheme IX farnesyltransferase 1 (300 aa).

Helical transmembrane passes span 26–46 (VVVLMLITSLVGMFLATRAGV), 48–68 (WTVLVFGNLGIALCAGGAAAV), 97–117 (AALAFALLLALAGQALLLTFT), 120–140 (LTAWLTLASLLGYAVVYTGFL), 148–168 (IVIGGLAGAAPPLLGWVAATG), 174–194 (PLLLVLIIFAWTPPHFWALAI), 226–246 (FALLAVSLLPYVIHMSGVLYL), and 280–300 (IYYLFLLFIALLVDHYLLLNL).

This sequence belongs to the UbiA prenyltransferase family. Protoheme IX farnesyltransferase subfamily.

The protein localises to the cell inner membrane. The enzyme catalyses heme b + (2E,6E)-farnesyl diphosphate + H2O = Fe(II)-heme o + diphosphate. It functions in the pathway porphyrin-containing compound metabolism; heme O biosynthesis; heme O from protoheme: step 1/1. In terms of biological role, converts heme B (protoheme IX) to heme O by substitution of the vinyl group on carbon 2 of heme B porphyrin ring with a hydroxyethyl farnesyl side group. This Pseudomonas fluorescens (strain ATCC BAA-477 / NRRL B-23932 / Pf-5) protein is Protoheme IX farnesyltransferase 1.